The primary structure comprises 860 residues: MMSIKAFTLVSAVERELLMGDKERVNIECVECCGRDLYVGTNDCFVYHFLLEERPVPAGPATFTATKQLQRHLGFKKPVNELRAASALNRLLVLCDNSISLVNMLNLEPVPSGARIKGAATFALNENPVSGDPFCVEVCIISVKRRTIQMFLVYEDRVQIVKEVSTAEQPLAVAVDGHFLCLALTTQYIIHNYSTGVSQDLFPYCSEERPPIVKRIGRQEFLLAGPGGLGMFATVAGISQRAPVHWSENVIGAAVSFPYVIALDDEFITVHSMLDQQQKQTLPFKEGHILQDFEGRVIVATSKGVYILVPLPLEKQIQDLLASRRVEEALVLAKGARRNIPKEKFQVMYRRILQQAGFIQFAQLQFLEAKELFRSGQLDVRELISLYPFLLPTSSSFTRSHPPLHEYADLNQLTQGDQEKMAKCKRFLMSYLNEVRSTEVANGYKEDIDTALLKLYAEADHDSLLDLLVTENFCLLTDSAAWLEKHKKYFALGLLYHYNNQDAAAVQLWVNIVNGDVQDSTRSDLYEYIVDFLTYCLDEELVWAYADWVLQKSEEVGVQVFTKRPLDEQQKNSFNPDDIINCLKKYPKALVKYLEHLVIDKRLQKEEYHTHLAVLYLEEVLLQRASASGKGAEATETQAKLRRLLQKSDLYRVHFLLERLQGAGLPMESAILHGKLGEHEKALHILVHELQDFAAAEDYCLWCSEGRDPPHRQQLFHTLLAIYLHAGPTAHELAVAAVDLLNRHATEFDAAQVLQMLPDTWSVQLLCPFLMGAMRDSIHARRTMQVALGLARSENLIYTYDKMKLKGSSIQLSDKKLCQICQNPFCEPVFVRYPNGGLVHTHCAASRHTNPSSSSPGTRT.

The region spanning 24 to 297 (RVNIECVECC…HILQDFEGRV (274 aa)) is the CNH domain. The CHCR repeat unit spans residues 564 to 728 (RPLDEQQKNS…LLAIYLHAGP (165 aa)).

Belongs to the TRAP1 family. Interacts with TGFBR2 and ACVR2B; in the absence of ligand stimulation. Interacts with TGFBR1, ACVRL1, BMPR1A and ACVR1B; in the absence of ligand stimulation and to a less extent. Interacts with SMAD4; the interaction seems to be mutually exclusive with the interaction of SMAD4 and phosphorylated SMAD2. May interact with ALOX5. Interacts with RAB5C. Interacts with VPS8, VPS11 and VPS16. Component of the putative class C core vacuole/endosome tethering (CORVET) complex; the core of which composed of the class C Vps proteins VPS11, VPS16, VPS18 and VPS33A, is associated with VPS8 and TGFBRAP1.

It localises to the cytoplasm. The protein resides in the early endosome. Its function is as follows. Plays a role in the TGF-beta/activin signaling pathway. It associates with inactive heteromeric TGF-beta and activin receptor complexes, mainly through the type II receptor, and is released upon activation of signaling. May recruit SMAD4 to the vicinity of the receptor complex and facilitate its interaction with receptor-regulated Smads, such as SMAD2. Functionally, plays a role in vesicle-mediated protein trafficking of the endocytic membrane transport pathway. Believed to act as a component of the putative CORVET endosomal tethering complexes which is proposed to be involved in the Rab5-to-Rab7 endosome conversion probably implicating MON1A/B, and via binding SNAREs and SNARE complexes to mediate tethering and docking events during SNARE-mediated membrane fusion. The CORVET complex is proposed to function as a Rab5 effector to mediate early endosome fusion probably in specific endosome subpopulations. Functions predominantly in APPL1-containing endosomes and in degradative but not recycling trafficking of endocytosed cargo. The protein is Transforming growth factor-beta receptor-associated protein 1 (TGFBRAP1) of Homo sapiens (Human).